The chain runs to 931 residues: Dual serine/threonine and tyrosine protein kinase (931 aa).

The interval 1–24 (MEGDAPQRVSERVSGPGPGGGGGG) is disordered. Positions 397–424 (RKKENELYESLMNIANRKQEEMKDMICE) form a coiled coil. Residues 654 to 908 (PKLGQELGRG…PLLGIVQPML (255 aa)) form the Protein kinase domain. Residues 660 to 668 (LGRGQYGVV) and lysine 683 contribute to the ATP site. Aspartate 779 functions as the Proton acceptor in the catalytic mechanism.

This sequence belongs to the protein kinase superfamily. Ser/Thr protein kinase family.

It localises to the cytoplasm. It is found in the cell membrane. Its subcellular location is the apical cell membrane. The protein resides in the basolateral cell membrane. The protein localises to the cell junction. It catalyses the reaction L-seryl-[protein] + ATP = O-phospho-L-seryl-[protein] + ADP + H(+). The enzyme catalyses L-threonyl-[protein] + ATP = O-phospho-L-threonyl-[protein] + ADP + H(+). The catalysed reaction is L-tyrosyl-[protein] + ATP = O-phospho-L-tyrosyl-[protein] + ADP + H(+). Functionally, acts as a positive regulator of ERK phosphorylation downstream of fibroblast growth factor-receptor activation. Involved in the regulation of both caspase-dependent apoptosis and caspase-independent cell death. In the skin, it plays a predominant role in suppressing caspase-dependent apoptosis in response to UV stress in a range of dermal cell types. In Canis lupus familiaris (Dog), this protein is Dual serine/threonine and tyrosine protein kinase (DSTYK).